A 440-amino-acid chain; its full sequence is Asparagine--tRNA ligase (440 aa).

Belongs to the class-II aminoacyl-tRNA synthetase family. Homodimer.

It localises to the cytoplasm. The catalysed reaction is tRNA(Asn) + L-asparagine + ATP = L-asparaginyl-tRNA(Asn) + AMP + diphosphate + H(+). In Roseiflexus sp. (strain RS-1), this protein is Asparagine--tRNA ligase.